A 992-amino-acid polypeptide reads, in one-letter code: MGPPSSSGFYVSRAVALLLAALAAALLLALAVLAALYGRCARVQPSDLHHSGVPDAASSPRGTQEEPLPTWPPRPTREPAGTATPGHWRPPGPWDQLRLPPWLVPLHYELELWPRLRPNEFQSPTLSFTGRVNITVRCAAATARLLLHSLFLDCESAEVRGPLSSGPRDGALGRVPVDDVWFAFDMQYMVLELGATLQPGSRYELQLSFSGLVYRDLREGLFFSIYTDQGERRALLASQMEPTFARSVFPCFDEPALKATFNITIIHHPSYGALSNMPKLGQSEKRDVNGSVWTVTTFSTTPHMPTYLVALAICDYDHVSRTERGQEIRIWARKDAIANGNAAFALNITGPIFSFLEDLFNISYPLPKTDIIALPTFDNSAMENWGLLIFDESLLLMQPNDQVTDKKAVISFILSHEIGHQWFGNLVTMNWWNDIWLKEGFASYFEFGVINYFNPKFRRNEVFFSNILHHVLSEDHALVSRAVSLKVENFTETSEINELFDLFTYNKGASLARMLSSFLNENVFISALKSYLKTFSYSNAEQDDLWRHFQMVVDNQSKILLPAPVKSIMDRWTHQSGFPVITLNVSTGAMKQEPFYLGKVQNQTLLTHNDTWIVPILWIKNGITQSLVWLDKSSEIFPEMQVSDSDHDWVILNLNMTGYYRVNYDKVGWKKLKQQLEKDPKAIPVIHRLQMIDDAFSLSKNNYVEIETALDLTKYLAEEDEIIVWYAVLVNLVTKDLVFDVNNYDMYPLLKKYLLKRLISIWNMYSTVIRENVAALQDDYLALVALEKLFETACWLGLEDCLQLSRELFKNWTNHPENEIPYPIKSVVLCYGVAFGSDEEWDFLLNMYSNKTKEEERIQLTYAMSCSKDPWILHRYLEYAVTAAPFTFNETNIMEVVAESEVGRYIVKDFLINNWQAVSERYGTQSLVNLMYIIGRTISTDLQITELQQFFGNMLEEHQKLTVRAKLQTIKNKNLENKKRNARMTAWLRKNT.

Topologically, residues G2–R13 are cytoplasmic. Residues A14 to A34 traverse the membrane as a helical; Signal-anchor for type II membrane protein segment. The Extracellular portion of the chain corresponds to A35–T992. A disordered region spans residues D47–G92. An N-linked (GlcNAc...) asparagine glycan is attached at N133. Substrate is bound at residue E241. Residues N262, N289, N347, and N361 are each glycosylated (N-linked (GlcNAc...) asparagine). Position 380-384 (S380–N384) interacts with substrate. H416 contacts Zn(2+). E417 (proton acceptor) is an active-site residue. Positions 420 and 439 each coordinate Zn(2+). Residue Y505 is the Proton donor of the active site. N555, N584, N602, N609, N655, N811, N850, and N889 each carry an N-linked (GlcNAc...) asparagine glycan.

It belongs to the peptidase M1 family. Zn(2+) is required as a cofactor. Expressed in skin. Expression levels do not differ between dark and light skin areas.

It is found in the membrane. Metalloprotease which may be important for placentation by regulating biological activity of key peptides at the embryo-maternal interface. Involved in coat pigmentation patterns. During skin development, may be required to establish the periodicity of tabby markings, initiating a pre-pattern at or before hair follicle development. The chain is Aminopeptidase Q (LVRN) from Felis catus (Cat).